Here is a 750-residue protein sequence, read N- to C-terminus: Neprilysin (750 aa).

The segment covering 1–14 has biased composition (polar residues); sequence MGKSESQMDITDIN. The tract at residues 1–20 is disordered; sequence MGKSESQMDITDINTPKPKK. Residue Gly-2 is the site of N-myristoyl glycine attachment. The Cytoplasmic portion of the chain corresponds to 2–28; that stretch reads GKSESQMDITDINTPKPKKKQRWTPLE. A phosphoserine mark is found at Ser-4 and Ser-6. Residues 16–23 carry the Stop-transfer sequence motif; sequence PKPKKKQR. A helical; Signal-anchor for type II membrane protein membrane pass occupies residues 29 to 51; it reads ISLSVLVLLLTIIAVTMIALYAT. Residues 52 to 750 lie on the Extracellular side of the membrane; that stretch reads YDDGICKSSD…MNPEKKCRVW (699 aa). The 695-residue stretch at 56–750 folds into the Peptidase M13 domain; that stretch reads ICKSSDCIKS…MNPEKKCRVW (695 aa). Cystine bridges form between Cys-57-Cys-62, Cys-80-Cys-735, Cys-88-Cys-695, Cys-143-Cys-411, Cys-234-Cys-242, and Cys-621-Cys-747. Arg-103 contacts a peptide. The N-linked (GlcNAc...) asparagine glycan is linked to Asn-145. Asn-285 and Asn-325 each carry an N-linked (GlcNAc...) asparagine glycan. His-584 contributes to the Zn(2+) binding site. Glu-585 is a catalytic residue. His-588 lines the Zn(2+) pocket. An N-linked (GlcNAc...) asparagine glycan is attached at Asn-628. Glu-647 provides a ligand contact to Zn(2+). Asp-651 (proton donor) is an active-site residue.

It belongs to the peptidase M13 family. The cofactor is Zn(2+). Post-translationally, myristoylation is a determinant of membrane targeting. In terms of processing, glycosylation at Asn-628 is necessary both for surface expression and neutral endopeptidase activity.

The protein localises to the cell membrane. The catalysed reaction is Preferential cleavage of polypeptides between hydrophobic residues, particularly with Phe or Tyr at P1'.. The enzyme catalyses substance P + H2O = substance P(1-9) + L-Leu-L-Met-NH2. It carries out the reaction substance P + H2O = substance P(1-7) + L-Phe-Gly-L-Leu-L-Met-NH2. It catalyses the reaction neurotensin + H2O = neurotensin(1-11) + L-isoleucyl-L-leucine. The catalysed reaction is neurotensin + H2O = neurotensin(1-10) + L-tyrosyl-L-isoleucyl-L-leucine. With respect to regulation, inhibited in a dose dependent manner by opiorphin. Activated by K49-P1-20, a twenty-residue synthetic peptide shortened from the snake B.asper myotoxin II. Its function is as follows. Thermolysin-like specificity, but is almost confined on acting on polypeptides of up to 30 amino acids. Biologically important in the destruction of opioid peptides such as Met- and Leu-enkephalins by cleavage of a Gly-Phe bond. Catalyzes cleavage of bradykinin, substance P and neurotensin peptides. Able to cleave angiotensin-1, angiotensin-2 and angiotensin 1-9. Involved in the degradation of atrial natriuretic factor (ANF) and brain natriuretic factor (BNP(1-32)). Displays UV-inducible elastase activity toward skin preelastic and elastic fibers. The polypeptide is Neprilysin (Homo sapiens (Human)).